A 164-amino-acid chain; its full sequence is Dynein regulatory complex protein 8 (164 aa).

2 consecutive EF-hand domains span residues 16 to 51 (ELHK…LGCC) and 94 to 129 (AAED…EGEP).

It belongs to the DRC8 family. As to quaternary structure, component of the nexin-dynein regulatory complex (N-DRC).

It localises to the cytoplasm. The protein resides in the cytoskeleton. It is found in the flagellum axoneme. In terms of biological role, component of the nexin-dynein regulatory complex (N-DRC), a key regulator of ciliary/flagellar motility which maintains the alignment and integrity of the distal axoneme and regulates microtubule sliding in motile axonemes. The sequence is that of Dynein regulatory complex protein 8 (Efcab2) from Mus musculus (Mouse).